Reading from the N-terminus, the 120-residue chain is DNA-binding protein HQ_1105A (120 aa).

Residues 1–55 are disordered; it reads MSETPDDLDELRQQRMEELRDQADGQQSQTSDNTAAAQEAAREKAEAQQEALLKQ. A compositionally biased stretch (basic and acidic residues) spans 10–23; sequence ELRQQRMEELRDQA. Over residues 24-34 the composition is skewed to polar residues; it reads DGQQSQTSDNT.

The protein belongs to the PDCD5 family.

The chain is DNA-binding protein HQ_1105A from Haloquadratum walsbyi (strain DSM 16790 / HBSQ001).